The chain runs to 349 residues: Small ribosomal subunit protein uS2 (349 aa).

It belongs to the universal ribosomal protein uS2 family.

In Methylocella silvestris (strain DSM 15510 / CIP 108128 / LMG 27833 / NCIMB 13906 / BL2), this protein is Small ribosomal subunit protein uS2.